We begin with the raw amino-acid sequence, 483 residues long: Centrosomal protein cep57l1 (483 aa).

The stretch at 94–228 (EHKKVLESEK…AQVQTSLEVN (135 aa)) forms a coiled coil. Disordered regions lie at residues 237–261 (AQNS…SKEP), 303–325 (PQVS…GGSR), and 416–460 (KEQP…SKAS). The span at 243 to 252 (RKVKKKKQSK) shows a compositional bias: basic residues. Residues 375-418 (EDLERELDYVVKQMEIKSDQIMKLKRHQLNVNKLKKTAKLLKEQ) adopt a coiled-coil conformation. The span at 420-435 (RPTSVTKLAADKQNTG) shows a compositional bias: polar residues.

This sequence belongs to the translokin family. Interacts with clip1, mis12, ndc80 and zwint. Interacts with gamma-tubulin.

The protein localises to the cytoplasm. The protein resides in the cytoskeleton. Its subcellular location is the microtubule organizing center. It is found in the centrosome. It localises to the chromosome. The protein localises to the centromere. The protein resides in the kinetochore. Its subcellular location is the spindle. In terms of biological role, required for spindle microtubule attachment to both kinetochores and centrosomes. Also functions to tether minus-ends of spindle microtubules to centrosomes. May act by forming ring-like structures around microtubules, or by serving as a cross-linker or scaffold at the attachment site. This Xenopus tropicalis (Western clawed frog) protein is Centrosomal protein cep57l1 (cep57l1).